The following is a 328-amino-acid chain: Homeobox protein Hox-C13 (328 aa).

The segment at 23–48 (AAESGSGGGGGGGGAGGAGGGCSGAS) is disordered. The segment covering 27–45 (GSGGGGGGGGAGGAGGGCS) has biased composition (gly residues). Positions 258–317 (GRKKRVPYTKVQLKELEKEYAASKFITKEKRRRISATTNLSERQVTIWFQNRRVKEKKVV) form a DNA-binding region, homeobox.

This sequence belongs to the Abd-B homeobox family. Expressed in differentiating keratinocytes. In the hair follicle lower matrix, expressed in all 3 hair shaft-forming compartments, i.e. cuticle, cortex and medulla. Expression stops sharply at the boundary with the germinal matrix compartment.

Its subcellular location is the nucleus. In terms of biological role, transcription factor which plays a role in hair follicle differentiation. Regulates FOXQ1 expression and that of other hair-specific genes. This Mus musculus (Mouse) protein is Homeobox protein Hox-C13 (Hoxc13).